A 376-amino-acid polypeptide reads, in one-letter code: Mitogen-activated protein kinase 2 (376 aa).

In terms of domain architecture, Protein kinase spans 32 to 319 (YVPIKPIGRG…VTEALQHPYM (288 aa)). Residues 38–46 (IGRGAYGVV) and lysine 61 each bind ATP. The Proton acceptor role is filled by aspartate 158. A Phosphothreonine modification is found at threonine 191. The TXY motif lies at 191-193 (TEY). Tyrosine 193 carries the post-translational modification Phosphotyrosine. Residue threonine 196 is modified to Phosphothreonine.

Belongs to the protein kinase superfamily. CMGC Ser/Thr protein kinase family. MAP kinase subfamily. Interacts with MKK3. In terms of processing, dually phosphorylated on Thr-191 and Tyr-193, which activates the enzyme. Phosphorylated on Ser residue. In terms of tissue distribution, highest levels in the stem. Present in the leaf, root and flower, but not in seeds.

The enzyme catalyses L-seryl-[protein] + ATP = O-phospho-L-seryl-[protein] + ADP + H(+). It carries out the reaction L-threonyl-[protein] + ATP = O-phospho-L-threonyl-[protein] + ADP + H(+). Its activity is regulated as follows. Activated by threonine and tyrosine phosphorylation. The sequence is that of Mitogen-activated protein kinase 2 (MPK2) from Arabidopsis thaliana (Mouse-ear cress).